The sequence spans 607 residues: DNA mismatch repair protein MutL (607 aa).

The protein belongs to the DNA mismatch repair MutL/HexB family.

Functionally, this protein is involved in the repair of mismatches in DNA. It is required for dam-dependent methyl-directed DNA mismatch repair. May act as a 'molecular matchmaker', a protein that promotes the formation of a stable complex between two or more DNA-binding proteins in an ATP-dependent manner without itself being part of a final effector complex. In Paramagnetospirillum magneticum (strain ATCC 700264 / AMB-1) (Magnetospirillum magneticum), this protein is DNA mismatch repair protein MutL.